Here is a 2768-residue protein sequence, read N- to C-terminus: Thyroglobulin (2768 aa).

The first 20 residues, 1-20 (MMTLVLWVSTLLSSVCLVAA), serve as a signal peptide directing secretion. Y25 is modified (iodotyrosine; alternate). Residue Y25 is modified to Sulfotyrosine; alternate. Thyroxine; alternate is present on Y25. At Y25 the chain carries Triiodothyronine; alternate. Thyroglobulin type-1 domains lie at 32–93 (LRPC…PTAC), 94–161 (LSFC…PTRC), 162–298 (PRSC…RFRC), and 299–359 (PTKC…PLFC). 8 disulfide bridges follow: C35–C53, C64–C71, C73–C93, C97–C121, C132–C139, C141–C161, C165–C184, and C195–C236. Y109 carries the iodotyrosine modification. N111 carries N-linked (GlcNAc...) asparagine glycosylation. At Y150 the chain carries Iodotyrosine; alternate. Y150 bears the Diiodotyrosine; alternate mark. Residue N199 is glycosylated (N-linked (GlcNAc...) asparagine). Iodotyrosine is present on residues Y235 and Y259. 8 cysteine pairs are disulfide-bonded: C302–C320, C331–C337, C339–C365, C408–C608, C631–C636, C638–C658, C662–C687, and C698–C703. 3 N-linked (GlcNAc...) asparagine glycosylation sites follow: N484, N496, and N545. 6 Thyroglobulin type-1 domains span residues 605-658 (AQAC…HPRC), 659-726 (PTKC…PKLC), 727-922 (PSVC…IPAC), 923-1074 (PGPC…MPQC), 1075-1146 (PTSC…SAQC), and 1147-1211 (PGLC…QPAC). An Iodotyrosine; alternate modification is found at Y704. A Thyroxine; alternate modification is found at Y704. Residue Y704 is modified to Triiodothyronine; alternate. Residue Y704 is modified to Diiodotyrosine; alternate. 16 disulfide bridges follow: C705–C726, C730–C763, C774–C899, C901–C922, C926–C1032, C1043–C1050, C1052–C1074, C1078–C1109, C1127–C1146, C1150–C1170, C1182–C1189, C1191–C1211, C1216–C1265, C1232–C1246, C1306–C1356, and C1331–C1347. N-linked (GlcNAc...) asparagine glycosylation occurs at N748. Y785 carries the post-translational modification Iodotyrosine. An N-linked (GlcNAc...) asparagine glycan is attached at N817. Y867 bears the Iodotyrosine; alternate mark. Diiodotyrosine; alternate is present on Y867. Y884 is modified (diiodotyrosine). N948 carries N-linked (GlcNAc...) asparagine glycosylation. Position 993 is an iodotyrosine; alternate (Y993). A Diiodotyrosine; alternate modification is found at Y993. N-linked (GlcNAc...) asparagine glycosylation is present at N1017. The N-linked (GlcNAc...) asparagine glycan is linked to N1141. Y1310 is subject to Iodotyrosine. Residue Y1310 is modified to Thyroxine. N-linked (GlcNAc...) asparagine glycans are attached at residues N1349 and N1365. Disulfide bonds link C1441–C1458, C1461–C1472, C1475–C1489, C1492–C1509, C1513–C1522, C1542–C1564, C1602–C1626, C1606–C1612, and C1638–C1661. Type II repeat units follow at residues 1455–1468 (PLGC…SFSQ), 1469–1485 (DGKC…GQAG), and 1486–1502 (SSAC…TITG). One can recognise a Thyroglobulin type-1 11 domain in the interval 1510-1564 (VTDCQRDEAGLQCDQNGQYQANQKDMDSGEVFCVDSEGQRLQWLQTEAGLSESQC). The Type IIIA repeat unit spans residues 1602 to 1722 (CLADCADDEA…GTNLTDTHLF (121 aa)). Residue N1715 is glycosylated (N-linked (GlcNAc...) asparagine). Intrachain disulfides connect C1723-C1748, C1727-C1733, C1732-C1834, and C1759-C1776. A Type IIIB repeat occupies 1723–1891 (CLLACDQDSC…LFSAEQANLW (169 aa)). 2 N-linked (GlcNAc...) asparagine glycosylation sites follow: N1773 and N1866. Cystine bridges form between C1892/C1918, C1896/C1903, C1927/C1938, C1995/C2023, C1999/C2005, C2004/C2075, and C2034/C2047. The stretch at 1892-1994 (CLSRCAQEPV…EKLISNGFFE (103 aa)) is one Type IIIA repeat. N1937 carries an N-linked (GlcNAc...) asparagine glycan. Residues 1995–2127 (CERLCDRDPC…SATRNFSLAQ (133 aa)) form a Type IIIB repeat. N2012 carries N-linked (GlcNAc...) asparagine glycosylation. An N-linked (GlcNAc...) asparagine glycan is attached at N2122. Residues 2128-2185 (DFCLQECSRHQDCLVTTLQIQQGVVRCVFYPDIQSCEHSLRSKTCWLLLHEEAAYIYR) form a Type IIIA repeat. Cystine bridges form between C2130-C2154, C2134-C2140, and C2163-C2172. Position 2184 is an iodotyrosine (Y2184). Residues 2188-2768 (GAPLHQSDGI…LEPVPKSYSK (581 aa)) are cholinesterase-like (ChEL). The N-linked (GlcNAc...) asparagine glycan is linked to N2251. C2265 and C2282 are disulfide-bonded. N2296 and N2445 each carry an N-linked (GlcNAc...) asparagine glycan. Residues C2443 and C2454 are joined by a disulfide bond. A Thyroxine modification is found at Y2541. Y2574 is modified (iodotyrosine; alternate). Y2574 is subject to Thyroxine; alternate. Y2574 is modified (triiodothyronine; alternate). Diiodotyrosine; alternate is present on Y2574. N2583 carries N-linked (GlcNAc...) asparagine glycosylation. Y2588 and Y2618 each carry iodotyrosine. C2592 and C2716 are disulfide-bonded. Y2698 bears the Diiodotyrosine mark. The interval 2731 to 2768 (GAKDAQLTKSGEEDLEVGPGSEEDFSGSLEPVPKSYSK) is disordered. A compositionally biased stretch (acidic residues) spans 2743–2755 (EDLEVGPGSEEDF). Y2766 is subject to Iodotyrosine; alternate. Residue Y2766 is modified to Thyroxine; alternate. A Triiodothyronine; alternate modification is found at Y2766. Y2766 is modified (diiodotyrosine; alternate).

Belongs to the type-B carboxylesterase/lipase family. In terms of assembly, monomer. Homodimer (via ChEL region); occurs in the endoplasmic reticulum and is required for export to the Golgi apparatus. Homooligomer; disulfide-linked; stored in this form in the thyroid follicle lumen. In terms of processing, iodinated on tyrosine residues by TPO. There are 4 pairs of iodinated tyrosines used for coupling: acceptor Tyr-25 is coupled to donor Tyr-150 or Tyr-235, acceptor Tyr-2574 is coupled to donor Tyr-2541, acceptor Tyr-2766 in monomer 1 is coupled to donor Tyr-2766 in monomer 2 and acceptor Tyr-1310 in monomer 1 is coupled to donor Tyr-109 in monomer 2. Sulfated tyrosines are desulfated during iodination. Post-translationally, undergoes sequential proteolysis by cathepsins to release thyroxine (T4) and triiodothyronine (T3) hormones. In the thyroid follicle lumen, cross-linked TG (storage form) is solubilized by limited proteolysis mediated by cathepsins CTSB and/or CTSL. Partially cleaved TG is further processed by CTSK/cathepsin K and/or CTSL resulting in the release of thyroxine (T4). Following endocytosis, further processing occurs leading to the release of triiodothyronine (T3) and more T4 hormones. As to expression, specifically expressed in the thyroid gland.

It localises to the secreted. Its function is as follows. Acts as a substrate for the production of iodinated thyroid hormones thyroxine (T4) and triiodothyronine (T3). The synthesis of T3 and T4 involves iodination of selected tyrosine residues of TG/thyroglobulin followed by their oxidative coupling. Following TG re-internalization and lysosomal-mediated proteolysis, T3 and T4 are released from the polypeptide backbone leading to their secretion into the bloodstream. One dimer produces 7 thyroid hormone molecules. This chain is Thyroglobulin (Tg), found in Rattus norvegicus (Rat).